The primary structure comprises 573 residues: MAVLNQLPVLGMIKEFRRSWRALCSSERTTLCGPDSMLLALQLSMAENNKQHRGEFTVCLSDVLLTWKYFLHEKLNLPIENMKVVEHYEDIKKTYDDFLKNSNTLDLIDVYKKCSSLTSNYENNMISPIQLRDFLSGTEYAVSDEANPHMPESPVKCSQNDEQVRVLVKKIFFSYLSLLVNSKNDLALASILNIPDRGLGREAFTNLKHAAREKQLSMFLMATSFIRTLELGGKGYAPSPSDPLWAHVKGLSEFINFIDKLDEILGKIPNPSLAGSRILSAIKMQLIKGHSSGEPFYKAVEEVVQDLNLRIKNIINSQEGVAVSANNISPVPPKSFAINHDTAYCGRDAVKILLVLLDEDAASAPTRNKAELLYNDESTVPHSGPSVLTLFRSPTQEKNTSVKPLRERIHKSLQTEKNKMWQTLIRSQFACTYKDDCIMSKNKWHVNSSSKPLSALHLEDDVSEGAQSSVGKARIEASSENAHVGRWKGDKLPRKSTQRQISKGKQLDLDSENLHCDRGNELYQHKNIKIPKVPSGSHSKAGGKLAQGTKGNRCPARGKLIPGQTKLTQFFML.

Disordered regions lie at residues 470-505 (VGKARIEASSENAHVGRWKGDKLPRKSTQRQISKGK) and 531-560 (PKVPSGSHSKAGGKLAQGTKGNRCPARGKL).

This sequence belongs to the PARI family. As to quaternary structure, interacts with RAD51 and PCNA. Interacts with PARP1. Interacts with TASOR. In terms of tissue distribution, expressed in the ovary, Sertoli cells of the testis and in granular cells within the cerebellum.

It localises to the cytoplasm. The protein localises to the nucleus. Its function is as follows. Required to suppress inappropriate homologous recombination, thereby playing a central role DNA repair and in the maintenance of genomic stability. Antagonizes homologous recombination by interfering with the formation of the RAD51-DNA homologous recombination structure. Binds single-strand DNA and poly(A) homopolymers. Positively regulate the poly(ADP-ribosyl)ation activity of PARP1; however such function may be indirect. The sequence is that of PCNA-interacting partner (Parpbp) from Mus musculus (Mouse).